Consider the following 202-residue polypeptide: Small ribosomal subunit protein uS4 (202 aa).

Positions 15-42 (LGDLPGLTRKAAKRSYPPGQHGQARRKR) are disordered. The 63-residue stretch at 90 to 152 (SRLDNICFRL…KGSKQLAEGN (63 aa)) folds into the S4 RNA-binding domain.

This sequence belongs to the universal ribosomal protein uS4 family. As to quaternary structure, part of the 30S ribosomal subunit. Contacts protein S5. The interaction surface between S4 and S5 is involved in control of translational fidelity.

One of the primary rRNA binding proteins, it binds directly to 16S rRNA where it nucleates assembly of the body of the 30S subunit. Its function is as follows. With S5 and S12 plays an important role in translational accuracy. In Synechococcus sp. (strain CC9902), this protein is Small ribosomal subunit protein uS4.